Consider the following 1350-residue polypeptide: 1-phosphatidylinositol 4,5-bisphosphate phosphodiesterase gamma plc-3 (1350 aa).

The interval 1–40 (MQHGSLGPSSSSRKTTVTSTAGSVHLHHRSSNGFSTASRA) is disordered. Residues 9-20 (SSSSRKTTVTST) are compositionally biased toward low complexity. A compositionally biased stretch (polar residues) spans 31 to 40 (SNGFSTASRA). Residues 352 to 503 (HDMSRPLSHY…LKKKIIVKHK (152 aa)) form the PI-PLC X-box domain. Residues His367 and His419 contribute to the active site. The disordered stretch occupies residues 570 to 594 (NPNDDTVSVSGDEEREEETPSGFGV). SH2 domains are found at residues 605-704 (WFHG…TIPC) and 715-804 (WFSA…RFPV). Positions 832–890 (DKEVQARALRPYRGTADDELSFPANVIITVLRKEEGLWRGRYGSLTGWFPSAHVQEILP) constitute an SH3 domain. Residues 855–960 (ANVIITVLRK…WQNNLFELTR (106 aa)) form the PH domain. Residues 982 to 1092 (LSNLVVYCQA…CGYLLKPDYM (111 aa)) form the PI-PLC Y-box domain. Positions 1099-1220 (PTNTEKFATA…CGFRSVPLKN (122 aa)) constitute a C2 domain. The disordered stretch occupies residues 1270–1350 (GDSIPREMAP…KFSFGKSSKS (81 aa)). Positions 1283–1329 (TSATDRSLDSPTNSESRATLLSGQRGSQDSMDSAAETSSIASGTISS) are enriched in polar residues. Residues 1340-1350 (KKFSFGKSSKS) are compositionally biased toward low complexity.

Ca(2+) serves as cofactor. Expressed in intestine, isthmus of the pharynx, proximal gonad sheath cells, spermatheca and uterine sheath cells. In males, expressed in the valve cell, the vas deferens and retractor and ventral protactor muscles.

The catalysed reaction is a 1,2-diacyl-sn-glycero-3-phospho-(1D-myo-inositol-4,5-bisphosphate) + H2O = 1D-myo-inositol 1,4,5-trisphosphate + a 1,2-diacyl-sn-glycerol + H(+). Mediates the production of the second messenger molecules diacylglycerol (DAG) and inositol 1,4,5-trisphosphate (IP3) which plays an important role in the regulation of intracellular signaling cascades. Regulates basal and ovulatory sheath cell contractions by controlling Ca(2+) oscillations via IP3-mediated activation of IP3 receptor itr-1. In intestinal epithelial cells, regulates Ca(2+) oscillations which control posterior body wall muscle contractions required for defecation by IP3-mediated activation of itr-1 and probably by activating TRPM channels gon-2 and gtl-1 by reducing PIP2 levels. By activating tpa-1 via DAG production, required for the expression of antimicrobial peptide nlp-29 in the epidermis in response to fungal infection or physical injury. By triggering Ca(2+) transient via IP3-mediated activation of IPR3 receptor itr-1 in ASH sensory neurons, involved in avoidance behavior in response to nose touch. Probably by regulating neuronal transmission in ALA neurons, mediates the decrease in pharyngeal pumping and locomotion during the quiescent state that precedes each larval molt, downstream of lin-3 and receptor let-23 and upstream of tpa-1 but not itr-1. During embryogenesis, may play an role in epidermal morphogenesis together with plc-1. Probably downstream of receptor daf-2, regulates male-sex muscle excitability in the absence of food. The chain is 1-phosphatidylinositol 4,5-bisphosphate phosphodiesterase gamma plc-3 from Caenorhabditis elegans.